An 892-amino-acid polypeptide reads, in one-letter code: MNHSIKKTYLVFTMLLGFILLAGCNGDNNNDNSNNDNNGVLLTSIAVTPATPSMPLGLKQQFTAMGTYSDGTSSDITNSATWSSDDSTVATINGSGLAMGVIPGSVAITASLIDSSSNEQSATTTLTITDATLTALAITPVNPSLAKGLTKQFMATGTYSDGTSPDVTTSVTWSSANTLVATVNASGLASGVAIGSSIITASLGSDETTTELNITDAILSSIALTPVEPSIAKGITQQFTAIGTYSDGISVDITASSNWSSADTLVATMNTSGAAKGVSIGSSIITADFQAQSATSLLTVTDASLTSIMLTPANPHIPKGNTLQLTATGIYSDGISVDITSSAIWSSADTLIATVNADGVVSGITSGSAIITATSAALSATTTVTVTDTTLTSIAVTPGNQTIVKGSNKQLTATGTYSDGSLANITASVTWSSADTLVATVNNSGLASGIETGSSLISASSGALSGSTNLTITGAALNSIVVSPTNLSLVKGMNKQFAATATYSDGSVADISTSVTWSSADTLVATIDVNGLANGKAAGSSLITATSGAQSNSTNLTVTDATLNSIDVTPINPSIIKNSSQNFVATGHYSDGSTTNITSTVMWSSADTLVATLNPNEQLNSGRATAIEVGSSVIQASLSGVFADTTLNVTAALPNNPLAPELGEVARFAMLASQAITTTSGSAIVDGDLGILDQARSYYAGFTPGVNAGEFDELTNGLSYAGDDSTPPYVVPVPYASMVAFINQSRTDLGIAYNFLAADPNPNAATQVCPIELGNLTLTRGVYKTAADVTLQTGTLTLDGEGDPDSVFIFTIGGNLTSGAPGGDIVLINGAQAKNIYWRTAGKTVIGTNTNFSGNVFAWSEVNVRTGANVTGRLFAVTDQVTLDANAVTKAN.

Residues 1–23 (MNHSIKKTYLVFTMLLGFILLAG) form the signal peptide. Cysteine 24 is lipidated: N-palmitoyl cysteine. Cysteine 24 carries S-diacylglycerol cysteine lipidation. 7 consecutive BIG2 domains span residues 43–111 (TSIA…ITAS), 134–205 (TALA…SLGS), 221–288 (SIAL…ITAD), 306–386 (TSIM…TVTV), 392–471 (TSIA…TNLT), 478–558 (NSIV…NLTV), and 565–638 (SIDV…QASL). The Ice-binding site motif (T-A/G-X-T/N) signature appears at 866 to 869 (TGAN).

Belongs to the ice-binding protein family.

It is found in the cell outer membrane. In terms of biological role, ice-binding adhesion protein that adsorbs this bacterium onto ice to maintain a favorable position in its aquatic habitat. Inhibits growth of the ice crystals. Has high thermal hysteresis (TH) activity, which is the ability to lower the freezing point of an aqueous solution below its melting point. The TH activity of this protein is approximately 1.4 degrees Celsius at 25 uM and little below 2 degrees Celsius at 80 uM. This chain is Ice-binding protein 1, found in Shewanella frigidimarina (strain NCIMB 400).